A 196-amino-acid polypeptide reads, in one-letter code: Small ribosomal subunit protein uS4c (196 aa).

The interval 17–36 (ALPGLTRKTPKSGSNLKKKF) is disordered. One can recognise an S4 RNA-binding domain in the interval 89-150 (MRLDNILFRL…NQRSKRLIQN (62 aa)).

The protein belongs to the universal ribosomal protein uS4 family. Part of the 30S ribosomal subunit. Contacts protein S5. The interaction surface between S4 and S5 is involved in control of translational fidelity.

Its subcellular location is the plastid. The protein localises to the chloroplast. Functionally, one of the primary rRNA binding proteins, it binds directly to 16S rRNA where it nucleates assembly of the body of the 30S subunit. With S5 and S12 plays an important role in translational accuracy. This is Small ribosomal subunit protein uS4c (rps4) from Phyllostachys flexuosa (Drooping timber bamboo).